Reading from the N-terminus, the 330-residue chain is MQDRLFVSMEHPRALPETDLIKGAIVGAGAVGMAIAYSMLIQNTFDELVLVDIDRRKVEGEVMDLVHGIPFVEPSVVRAGTLADCRGVDVVVITAGARQREGETRLSLVQRNVEIFRGLIGEIMEHCPNAILLVVSNPVDVMTYVAMKLAGLPPSRVIGSGTVLDTARFRYLLAERLRVDPRSLHAYIIGEHGDSEVPVWSRANVAGAFLSEIEPAVGTPDDPAKMFEVFEHVKNAAYEIIERKGATSWAIGLATTQIVRAITRNQNRVLPVSVLMSGLHGIEEVCLAYPAVLNRQGIDRLVKFSLSPGEEEQLQRSARVMRQTLDGIQF.

Residues V31, D52, K57, and G96 to A97 each bind NAD(+). Residues Q99, R105, and N137–D140 each bind substrate. NAD(+)-binding positions include V135–N137 and S160. Substrate is bound at residue D165–R168. Beta-D-fructose 1,6-bisphosphate-binding residues include R170 and H185. H192 serves as the catalytic Proton acceptor. Position 238 is a phosphotyrosine (Y238). T247 contributes to the substrate binding site.

This sequence belongs to the LDH/MDH superfamily. LDH family. Homotetramer.

The protein resides in the cytoplasm. It carries out the reaction (S)-lactate + NAD(+) = pyruvate + NADH + H(+). Its pathway is fermentation; pyruvate fermentation to lactate; (S)-lactate from pyruvate: step 1/1. Allosterically activated by fructose 1,6-bisphosphate (FBP). Catalyzes the conversion of lactate to pyruvate. The sequence is that of L-lactate dehydrogenase from Gloeobacter violaceus (strain ATCC 29082 / PCC 7421).